Reading from the N-terminus, the 419-residue chain is Serine hydroxymethyltransferase (419 aa).

Residues L121 and G125–L127 each bind (6S)-5,6,7,8-tetrahydrofolate. Residue K230 is modified to N6-(pyridoxal phosphate)lysine. (6S)-5,6,7,8-tetrahydrofolate is bound by residues E246 and S355–F357.

It belongs to the SHMT family. In terms of assembly, homodimer. Pyridoxal 5'-phosphate is required as a cofactor.

It localises to the cytoplasm. The enzyme catalyses (6R)-5,10-methylene-5,6,7,8-tetrahydrofolate + glycine + H2O = (6S)-5,6,7,8-tetrahydrofolate + L-serine. Its pathway is one-carbon metabolism; tetrahydrofolate interconversion. It participates in amino-acid biosynthesis; glycine biosynthesis; glycine from L-serine: step 1/1. Functionally, catalyzes the reversible interconversion of serine and glycine with tetrahydrofolate (THF) serving as the one-carbon carrier. This reaction serves as the major source of one-carbon groups required for the biosynthesis of purines, thymidylate, methionine, and other important biomolecules. Also exhibits THF-independent aldolase activity toward beta-hydroxyamino acids, producing glycine and aldehydes, via a retro-aldol mechanism. The polypeptide is Serine hydroxymethyltransferase (Streptococcus suis (strain 98HAH33)).